A 264-amino-acid polypeptide reads, in one-letter code: Thymidylate synthase (264 aa).

Position 21 (Arg21) interacts with dUMP. His51 serves as a coordination point for (6R)-5,10-methylene-5,6,7,8-tetrahydrofolate. 126-127 contributes to the dUMP binding site; sequence RR. Cys146 (nucleophile) is an active-site residue. DUMP is bound by residues 166–169, Asn177, and 207–209; these read RSCD and HLY. A (6R)-5,10-methylene-5,6,7,8-tetrahydrofolate-binding site is contributed by Asp169. Residue Ala263 coordinates (6R)-5,10-methylene-5,6,7,8-tetrahydrofolate.

It belongs to the thymidylate synthase family. Bacterial-type ThyA subfamily. Homodimer.

It localises to the cytoplasm. The enzyme catalyses dUMP + (6R)-5,10-methylene-5,6,7,8-tetrahydrofolate = 7,8-dihydrofolate + dTMP. The protein operates within pyrimidine metabolism; dTTP biosynthesis. Functionally, catalyzes the reductive methylation of 2'-deoxyuridine-5'-monophosphate (dUMP) to 2'-deoxythymidine-5'-monophosphate (dTMP) while utilizing 5,10-methylenetetrahydrofolate (mTHF) as the methyl donor and reductant in the reaction, yielding dihydrofolate (DHF) as a by-product. This enzymatic reaction provides an intracellular de novo source of dTMP, an essential precursor for DNA biosynthesis. In Klebsiella pneumoniae subsp. pneumoniae (strain ATCC 700721 / MGH 78578), this protein is Thymidylate synthase.